The primary structure comprises 296 residues: MAAVSSAASLRGADYENGLRGGAGPSGGGQDPGEDDPMGRGTLDLDLELLGQGRRSRRVGGRTAPGRRSGGRGGSGGGGAGGLEELEDEELEEEEPGELTGDQTIEDPELEAIKARVREMEEEAEKLKELQNEVEKQMNMSPPPGNAGPVIMSIEEKMEADARSIYVGNVDYGATAEELEAHFHGCGSVNRVTILCDKYTGHPKGFAYIEFSDKESVRTSLALDESLFRGRQIKVVPKRTNRPGISTTDRGFPRARYRARASSYSSRSRFYSGYTPRPRGRVYRGRARVTSWYTPY.

The segment at 1–102 (MAAVSSAASL…EEEPGELTGD (102 aa)) is disordered. Gly residues-rich tracts occupy residues 19 to 31 (LRGGAGPSGGGQD) and 71 to 82 (GRGGSGGGGAGG). Acidic residues predominate over residues 84–97 (EELEDEELEEEEPG). Residues 107-141 (DPELEAIKARVREMEEEAEKLKELQNEVEKQMNMS) adopt a coiled-coil conformation. The interval 146–296 (NAGPVIMSIE…ARVTSWYTPY (151 aa)) is necessary for homooligomerization. The RRM domain maps to 163–240 (RSIYVGNVDY…RQIKVVPKRT (78 aa)).

In terms of assembly, monomer and homooligomer. Binds RNA as a monomer and oligomerizes when bound to poly(A).

The protein resides in the nucleus. The protein localises to the cytoplasm. Its function is as follows. Involved in the 3'-end formation of mRNA precursors (pre-mRNA) by the addition of a poly(A) tail of 200-250 nt to the upstream cleavage product. Stimulates poly(A) polymerase (PAPOLA) conferring processivity on the poly(A) tail elongation reaction and also controls the poly(A) tail length. Increases the affinity of poly(A) polymerase for RNA. Binds to poly(A) and to poly(G) with high affinity. May protect the poly(A) tail from degradation. The protein is Polyadenylate-binding protein 2 of Xenopus tropicalis (Western clawed frog).